Here is a 666-residue protein sequence, read N- to C-terminus: Enzymatic polyprotein (666 aa).

Asp-54 is a catalytic residue. Residues 215–445 (ENPIDPIKSK…EKINFLGLEI (231 aa)) enclose the Reverse transcriptase domain.

This sequence belongs to the caulimoviridae enzymatic polyprotein family.

It catalyses the reaction DNA(n) + a 2'-deoxyribonucleoside 5'-triphosphate = DNA(n+1) + diphosphate. In terms of biological role, encodes for at least two polypeptides: protease (PR) and reverse transcriptase (RT). The protease processes the polyprotein in cis. Reverse transcriptase is multifunctional enzyme that converts the viral RNA genome into dsDNA in viral cytoplasmic capsids. This enzyme displays a DNA polymerase activity that can copy either DNA or RNA templates, and a ribonuclease H (RNase H) activity that cleaves the RNA strand of RNA-DNA heteroduplexes in a partially processive 3'- to 5'-endonucleasic mode. Neo-synthesized pregenomic RNA (pgRNA) are encapsidated, and reverse-transcribed inside the nucleocapsid. Partial (+)DNA is synthesized from the (-)DNA template and generates the relaxed circular DNA (RC-DNA) genome. After budding and infection, the RC-DNA migrates in the nucleus, and is converted into a plasmid-like covalently closed circular DNA (cccDNA). In Figwort mosaic virus (strain DxS) (FMV), this protein is Enzymatic polyprotein.